The sequence spans 748 residues: LPS-assembly protein LptD (748 aa).

The first 19 residues, 1–19, serve as a signal peptide directing secretion; it reads MSKTWGILMLSVLSAPSLA.

It belongs to the LptD family. Component of the lipopolysaccharide transport and assembly complex. Interacts with LptE and LptA.

The protein resides in the cell outer membrane. Together with LptE, is involved in the assembly of lipopolysaccharide (LPS) at the surface of the outer membrane. The sequence is that of LPS-assembly protein LptD from Pseudoalteromonas translucida (strain TAC 125).